We begin with the raw amino-acid sequence, 145 residues long: Large ribosomal subunit protein bL17 (145 aa).

Belongs to the bacterial ribosomal protein bL17 family. Part of the 50S ribosomal subunit. Contacts protein L32.

This Francisella tularensis subsp. tularensis (strain FSC 198) protein is Large ribosomal subunit protein bL17.